The following is a 75-amino-acid chain: UPF0352 protein VV1166 (75 aa).

Belongs to the UPF0352 family.

This is UPF0352 protein VV1166 from Vibrio vulnificus (strain YJ016).